The sequence spans 679 residues: UvrABC system protein B (679 aa).

The region spanning 31 to 414 (ENLTDGLAHQ…ELEKSGTEII (384 aa)) is the Helicase ATP-binding domain. 44–51 (GVTGSGKT) serves as a coordination point for ATP. A Beta-hairpin motif is present at residues 97–120 (YYDYYQPEAYVPSSDTFIEKDASI). Positions 436–589 (QVDDLLSEAR…QIKYNEEHGI (154 aa)) constitute a Helicase C-terminal domain. Residues 639 to 674 (QQQIKKLEQQMYKFAQDLEFEKAAAIRDQLHQLREQ) form the UVR domain.

Belongs to the UvrB family. As to quaternary structure, forms a heterotetramer with UvrA during the search for lesions. Interacts with UvrC in an incision complex.

It localises to the cytoplasm. Its function is as follows. The UvrABC repair system catalyzes the recognition and processing of DNA lesions. A damage recognition complex composed of 2 UvrA and 2 UvrB subunits scans DNA for abnormalities. Upon binding of the UvrA(2)B(2) complex to a putative damaged site, the DNA wraps around one UvrB monomer. DNA wrap is dependent on ATP binding by UvrB and probably causes local melting of the DNA helix, facilitating insertion of UvrB beta-hairpin between the DNA strands. Then UvrB probes one DNA strand for the presence of a lesion. If a lesion is found the UvrA subunits dissociate and the UvrB-DNA preincision complex is formed. This complex is subsequently bound by UvrC and the second UvrB is released. If no lesion is found, the DNA wraps around the other UvrB subunit that will check the other stand for damage. This chain is UvrABC system protein B, found in Haemophilus influenzae (strain 86-028NP).